A 324-amino-acid chain; its full sequence is Protein FAM228B (324 aa).

It belongs to the FAM228 family.

In Homo sapiens (Human), this protein is Protein FAM228B (FAM228B).